Reading from the N-terminus, the 85-residue chain is MSAENISTGSPTGKQPSSEVNLGEREAGTKNERMMRQTKLLKDTLDLLWNKTLEQQEVCEQLKQENDYLEDYIGNLMRSSNVLEK.

The span at 1 to 20 (MSAENISTGSPTGKQPSSEV) shows a compositional bias: polar residues. Residues 1-34 (MSAENISTGSPTGKQPSSEVNLGEREAGTKNERM) are disordered. Ser2 bears the N-acetylserine mark. At Ser10 the chain carries Phosphoserine. The segment covering 22–34 (LGEREAGTKNERM) has biased composition (basic and acidic residues).

The protein belongs to the SLO1 family. Interacts with ARL3.

This chain is SCOCO-like protein 1 (SLO1), found in Saccharomyces cerevisiae (strain ATCC 204508 / S288c) (Baker's yeast).